The primary structure comprises 130 residues: uncharacterized protein (130 aa).

Residues 1–19 (MLAPLFLCCLRNLFRKLIS) form the signal peptide.

The protein resides in the secreted. This is an uncharacterized protein from Homo sapiens (Human).